We begin with the raw amino-acid sequence, 921 residues long: Probable dipeptidyl-aminopeptidase B (921 aa).

The interval 1–33 (MAGHTEENAQLLSTEQESVSRHSSDSAASTAST) is disordered. The Cytoplasmic portion of the chain corresponds to 1-109 (MAGHTEENAQ…NKSVDKKLRK (109 aa)). Residues 8–17 (NAQLLSTEQE) are compositionally biased toward polar residues. The helical; Signal-anchor for type II membrane protein transmembrane segment at 110-130 (LIWIVGGVFIGAWVLALFIFL) threads the bilayer. Topologically, residues 131-921 (GKQAYKHSSE…VPLQIDAAKV (791 aa)) are vacuolar. N-linked (GlcNAc...) asparagine glycosylation is present at asparagine 362. The active-site Charge relay system is serine 768. The N-linked (GlcNAc...) asparagine glycan is linked to asparagine 822. Catalysis depends on charge relay system residues aspartate 845 and histidine 878.

It belongs to the peptidase S9B family.

The protein resides in the vacuole membrane. The catalysed reaction is Release of an N-terminal dipeptide, Xaa-Yaa-|-Zaa-, from a polypeptide, preferentially when Yaa is Pro, provided Zaa is neither Pro nor hydroxyproline.. Its function is as follows. Type IV dipeptidyl-peptidase which removes N-terminal dipeptides sequentially from polypeptides having unsubstituted N-termini provided that the penultimate residue is proline. The chain is Probable dipeptidyl-aminopeptidase B (dapB) from Sclerotinia sclerotiorum (strain ATCC 18683 / 1980 / Ss-1) (White mold).